A 69-amino-acid polypeptide reads, in one-letter code: MGRLLVLLVRFYQLFISPVLPPSCRHSPTCSQYAIEALQKHGAIKGSWLAFRRVLRCNPWHPGGYDPVP.

It belongs to the UPF0161 family.

Its subcellular location is the cell inner membrane. Could be involved in insertion of integral membrane proteins into the membrane. This chain is Putative membrane protein insertion efficiency factor, found in Magnetococcus marinus (strain ATCC BAA-1437 / JCM 17883 / MC-1).